A 47-amino-acid polypeptide reads, in one-letter code: Protein YtiD (47 aa).

The protein is Protein YtiD (ytiD) of Escherichia coli (strain K12).